Consider the following 429-residue polypeptide: Glutamyl-tRNA reductase (429 aa).

Substrate contacts are provided by residues 56-59 (TCNR), serine 119, 124-126 (EPQ), and glutamine 130. Cysteine 57 acts as the Nucleophile in catalysis. 199 to 204 (GAGEMI) is an NADP(+) binding site.

This sequence belongs to the glutamyl-tRNA reductase family. As to quaternary structure, homodimer.

The catalysed reaction is (S)-4-amino-5-oxopentanoate + tRNA(Glu) + NADP(+) = L-glutamyl-tRNA(Glu) + NADPH + H(+). It functions in the pathway porphyrin-containing compound metabolism; protoporphyrin-IX biosynthesis; 5-aminolevulinate from L-glutamyl-tRNA(Glu): step 1/2. In terms of biological role, catalyzes the NADPH-dependent reduction of glutamyl-tRNA(Glu) to glutamate 1-semialdehyde (GSA). This is Glutamyl-tRNA reductase from Herminiimonas arsenicoxydans.